Consider the following 154-residue polypeptide: Probable chemoreceptor glutamine deamidase CheD (154 aa).

Belongs to the CheD family.

It carries out the reaction L-glutaminyl-[protein] + H2O = L-glutamyl-[protein] + NH4(+). In terms of biological role, probably deamidates glutamine residues to glutamate on methyl-accepting chemotaxis receptors (MCPs), playing an important role in chemotaxis. The polypeptide is Probable chemoreceptor glutamine deamidase CheD (Methanococcus maripaludis (strain DSM 14266 / JCM 13030 / NBRC 101832 / S2 / LL)).